A 136-amino-acid polypeptide reads, in one-letter code: Large ribosomal subunit protein uL16c (136 aa).

Residues 1–20 (MLSPKRTRFRKQHRGRMKGK) form a disordered region.

Belongs to the universal ribosomal protein uL16 family. Part of the 50S ribosomal subunit.

It is found in the plastid. The protein localises to the chloroplast. This chain is Large ribosomal subunit protein uL16c, found in Triticum aestivum (Wheat).